Reading from the N-terminus, the 376-residue chain is UDP-N-acetylglucosamine--N-acetylmuramyl-(pentapeptide) pyrophosphoryl-undecaprenol N-acetylglucosamine transferase (376 aa).

UDP-N-acetyl-alpha-D-glucosamine is bound by residues 11 to 13, asparagine 117, arginine 160, serine 208, and glutamine 310; that span reads TGG.

It belongs to the glycosyltransferase 28 family. MurG subfamily.

The protein resides in the cell inner membrane. The catalysed reaction is di-trans,octa-cis-undecaprenyl diphospho-N-acetyl-alpha-D-muramoyl-L-alanyl-D-glutamyl-meso-2,6-diaminopimeloyl-D-alanyl-D-alanine + UDP-N-acetyl-alpha-D-glucosamine = di-trans,octa-cis-undecaprenyl diphospho-[N-acetyl-alpha-D-glucosaminyl-(1-&gt;4)]-N-acetyl-alpha-D-muramoyl-L-alanyl-D-glutamyl-meso-2,6-diaminopimeloyl-D-alanyl-D-alanine + UDP + H(+). It functions in the pathway cell wall biogenesis; peptidoglycan biosynthesis. Functionally, cell wall formation. Catalyzes the transfer of a GlcNAc subunit on undecaprenyl-pyrophosphoryl-MurNAc-pentapeptide (lipid intermediate I) to form undecaprenyl-pyrophosphoryl-MurNAc-(pentapeptide)GlcNAc (lipid intermediate II). This Rickettsia massiliae (strain Mtu5) protein is UDP-N-acetylglucosamine--N-acetylmuramyl-(pentapeptide) pyrophosphoryl-undecaprenol N-acetylglucosamine transferase.